Reading from the N-terminus, the 606-residue chain is MNAVVPDSAKTQSAKSNLYTTLAKTHLGEVAAIIVSTLISYGRLTAKDLSNKSEVPLKLVKSTLVSLIQLSCISYWKEESSKQVFYSFNENGLLIFLHSGDIINHIKLTYGDESAGIIQNIIEVGHMKIEDYLQNIEDPEVVFNKENLLLKLFSDGWLSRVQMSNFQPIDDLWNQLYQETLKNTPRSTTISEIKRVNEAKDKTKLKFTNLLESGNSAKELFQIENGIKKLAPSLVIAFNLSRFEKHRRTEQLTNLAKARIGILTSKVYECALQLIEQHSPDLRHSFLKISGLINDPVEEQAFVNSIENQLVDDKKIVFNVKDLVKIAPKDLDLRNSILTHNFLKPTFNPKKRVNDDIPDTNPKKIKTEDGMNNLMIDLDPDVSENNLDFDMHNTDNSEPHSVSLINHHLKLLSSGVIPFLIEITPGTYTVPYTDLMKYVKQCNYDTLIKTTLGLDSFRLLRCLKSLKLADEKTLANTILLKEKTVRNELFKLMNLNMIEIQEVPRSADRAASKTFYLFRHKEFSAYNFLYNSLTFCMADILSNIQQFKNDNKILLEKCEREDVKGNEEELLLESELKTLKNLQLREINNIGKFNRIKTLYEIFDNF.

The interval 533-554 is leucine-zipper; sequence LTFCMADILSNIQQFKNDNKIL.

Belongs to the RNA polymerase beta chain family. Component of the RNA polymerase III (Pol III) complex consisting of 17 subunits.

Its subcellular location is the nucleus. Its function is as follows. DNA-dependent RNA polymerase catalyzes the transcription of DNA into RNA using the four ribonucleoside triphosphates as substrates. Specific core component of RNA polymerase III which synthesizes small RNAs, such as 5S rRNA and tRNAs. The sequence is that of DNA-directed RNA polymerase III subunit RPC3 (RPC82) from Debaryomyces hansenii (strain ATCC 36239 / CBS 767 / BCRC 21394 / JCM 1990 / NBRC 0083 / IGC 2968) (Yeast).